Consider the following 421-residue polypeptide: Chitin deacetylase (421 aa).

A signal peptide spans 1 to 21; sequence MQIKTFALSAAIAQVATLALA. 4 N-linked (GlcNAc...) asparagine glycosylation sites follow: Asn39, Asn70, Asn87, and Asn106. Positions 157 to 349 constitute a NodB homology domain; it reads ETWGLTYDDG…YKQVIDVATC (193 aa). Asp164 functions as the Proton acceptor in the catalytic mechanism. Asp164 is a binding site for acetate. Residue Asp165 coordinates Co(2+). A glycan (N-linked (GlcNAc...) asparagine) is linked at Asn168. Positions 214 and 218 each coordinate Co(2+). Tyr255 provides a ligand contact to acetate. N-linked (GlcNAc...) asparagine glycosylation occurs at Asn307. His320 (proton donor) is an active-site residue. 3 N-linked (GlcNAc...) asparagine glycosylation sites follow: Asn323, Asn351, and Asn367. Thr390 carries the GPI-anchor amidated threonine lipid modification. Positions 391–421 are cleaved as a propeptide — removed in mature form; sequence AAAHIQASTSGAMSVLPNLALISAFIATLLF.

The protein belongs to the polysaccharide deacetylase family. The cofactor is Co(2+).

The protein resides in the secreted. It is found in the cell wall. It localises to the cell membrane. It carries out the reaction [(1-&gt;4)-N-acetyl-beta-D-glucosaminyl](n) + n H2O = chitosan + n acetate. Functionally, hydrolyzes the N-acetamido groups of N-acetyl-D-glucosamine residues in chitin to form chitosan and acetate. In Amylomyces rouxii (Filamentous fungus), this protein is Chitin deacetylase.